We begin with the raw amino-acid sequence, 289 residues long: Melatonin receptor type 1B (289 aa).

Residues 1 to 2 (GN) lie on the Cytoplasmic side of the membrane. The helical transmembrane segment at 3-23 (AFVVSLALADLVVALYPYPLV) threads the bilayer. Residues 24-41 (LLAIFHNGWTLGEMHCKV) are Extracellular-facing. A disulfide bridge links C39 with C116. The helical transmembrane segment at 42–62 (SGFVMGLSVIGSIFNITAIAI) threads the bilayer. Residues 63 to 81 (NRYCYICHSFAYDKVYSCW) lie on the Cytoplasmic side of the membrane. A helical transmembrane segment spans residues 82-102 (NTMLYVSLIWVLTVIATVPNF). The Extracellular segment spans residues 103-126 (FVGSLKYDPRIYSCTFVQTASSYY). A helical membrane pass occupies residues 127–147 (TIAVVVIHFIVPITVVSFCYL). Over 148–179 (RIWVLVLQVRRRVKSETKPRLKPSDFRNFLTM) the chain is Cytoplasmic. The chain crosses the membrane as a helical span at residues 180-200 (FVVFVIFAFCWAPLNFIGLAV). The Extracellular portion of the chain corresponds to 201–213 (AINPSEMAPKVPE). A helical membrane pass occupies residues 214–234 (WLFIISYFMAYFNSCLNAIIY). Over 235–289 (GLLNQNFRNEYKRILMSLWMPRLFFQDTSKGGTDGQKSKPSPALNNNDQMKTDTL) the chain is Cytoplasmic. The disordered stretch occupies residues 264–289 (KGGTDGQKSKPSPALNNNDQMKTDTL).

It belongs to the G-protein coupled receptor 1 family. As to expression, brain and kidney, with trace levels in lungs.

It is found in the cell membrane. High affinity receptor for melatonin. The activity of this receptor is mediated by pertussis toxin sensitive G proteins that inhibits adenylate cyclase activity. This chain is Melatonin receptor type 1B, found in Gallus gallus (Chicken).